A 112-amino-acid polypeptide reads, in one-letter code: Large ribosomal subunit protein uL22 (112 aa).

The protein belongs to the universal ribosomal protein uL22 family. As to quaternary structure, part of the 50S ribosomal subunit.

In terms of biological role, this protein binds specifically to 23S rRNA; its binding is stimulated by other ribosomal proteins, e.g. L4, L17, and L20. It is important during the early stages of 50S assembly. It makes multiple contacts with different domains of the 23S rRNA in the assembled 50S subunit and ribosome. The globular domain of the protein is located near the polypeptide exit tunnel on the outside of the subunit, while an extended beta-hairpin is found that lines the wall of the exit tunnel in the center of the 70S ribosome. This chain is Large ribosomal subunit protein uL22, found in Desulfovibrio desulfuricans (strain ATCC 27774 / DSM 6949 / MB).